The chain runs to 299 residues: DNA-binding transcriptional repressor CapW (299 aa).

Positions 1-22 (MTDESKPTDDQPTSKGRQGARW) are disordered. The tract at residues 1-95 (MTDESKPTDD…SFKAVFPSSA (95 aa)) is winged HTH domain. The interval 96-207 (VERYLDDLLR…LTRIKCCKYV (112 aa)) is WYL domain. The region spanning 131–211 (GRRLNADIVG…KCCKYVGQDR (81 aa)) is the WYL domain. The probable ligand-binding region stretch occupies residues 156-200 (YQSLTDPEGGERMLSPHALVHDGNRWHVRAYCHKRKAFRDFSLTR). Residues 208–299 (GQDRDRADED…RDEIKDLIQY (92 aa)) form a WCX domain region.

Homodimer.

Functionally, transcriptional regulator of a CBASS antivirus system. CBASS (cyclic oligonucleotide-based antiphage signaling system) provides immunity against bacteriophage. The CD-NTase protein synthesizes cyclic nucleotides in response to infection; these serve as specific second messenger signals. The signals activate a diverse range of effectors, leading to bacterial cell death and thus abortive phage infection. A type III CBASS system, part of a Cap17-CapW-CdnC-Cap7-Cap6-Cap18 locus. Binds specifically to palindromes that overlap the -10 site in the promoter of cdnC, found between the genes for divergently transcribed capW and cdnC (cognate DNA). Probably represses transcription bidirectionally from the promoter. This Pseudomonas aeruginosa protein is DNA-binding transcriptional repressor CapW.